Here is an 867-residue protein sequence, read N- to C-terminus: Protein argonaute-3 (867 aa).

The tract at residues 1–83 (MSGRGNLLSL…IDTLKTDDHT (83 aa)) is necessary and sufficient for interaction with krimp. Residues 1 to 289 (MSGRGNLLSL…CDVSHRILCQ (289 aa)) are interaction with papi. Arginine 4, arginine 68, and arginine 70 each carry symmetric dimethylarginine. Residues 291–402 (TVLEMLVDLY…LIPELCYLTG (112 aa)) enclose the PAZ domain. The Piwi domain maps to 566–853 (MVVCICHNRR…LAYLIGQSIQ (288 aa)).

The protein belongs to the argonaute family. Piwi subfamily. Component of the ping-pong piRNA processing (4P) complex consisting of krimp, aub and AGO3. Interacts (via N-terminus when not methylated on arginine residues) with krimp (via non-canonical tudor domain); this interaction leads to symmetrical dimethylation on AGO3 arginine residues and its subsequent dissociation from krimp. Krimp associated AGO3 is mostly free of piRNA binding and the interaction plays an important role in the loading of AGO3 with piRNAs; piRNA binding may stimulate dissociation of the two proteins. May form part of a piRNA processing complex consisting of tud, aub and AGO3. Interacts (when symmetrically dimethylated on arginine residues) with tud. Forms a complex with smg, twin, aub, nos mRNA and piRNAs that target the nos 3'-untranslated region, in early embryos. Interacts (via the N-terminal region when symmetrically methylated on arginine residues) with papi (via C-terminus); this interaction is RNA-independent and may be required for AGO3 localization to the nuage. Interacts with TER94 and tral. In terms of processing, symmetrically dimethylated on Arg-4, Arg-68 and Arg-70, most likely by csul/PRMT5/DART5. Methylation state probably functions as an indicator of its piRNA binding state. As to expression, in ovary, expressed in germline stem cells, germline cyst cells, nurse cells and oocytes during early stages. Also found in the somatic cap cells of the germarium. In testis, expressed in germline stem cells, primary gonial cells and early spermatocytes. No expression detected in the somatic hub cells at the apical tip of the testis (at protein level). Expressed in neurons throughout the adult brain and in the mushroom body subdivision in the peduncle. In the mushroom body, expressed only in gamma and core alpha-beta neurons.

It localises to the cytoplasm. Its subcellular location is the perinuclear region. The protein localises to the cytoplasmic ribonucleoprotein granule. In terms of biological role, component of the perinuclear meiotic nuage, a germline-specific subcellular membraneless ribonucleoprotein compartment involved in production of transposable element-repressing Piwi-interacting RNA (piRNA)-induced silencing complexes (piRISCs), which are essential for maintaining germline integrity during oogenesis. Acts via the Piwi-interacting RNA (piRNA) metabolic process, which mediates the repression of transposable elements during meiosis by forming complexes composed of piRNAs and Piwi proteins and governs the methylation and subsequent repression of transposons. Piwi protein that directly binds piRNAs, a class of 24 to 30 nucleotide RNAs that are generated by a Dicer-independent mechanism and are primarily derived from transposons and other repeated sequence elements. Associates predominantly with sense piRNAs that contain adenine at nucleotide 10, but shows no preference for uridine at the 5' end. Shows RNA cleavage or slicer activity. Together with Piwi protein aub recruited to subregions of the perinuclear nuage by krimp, which coordinates their activity in the ping-pong amplification step of secondary piRNA biogenesis. Krimp recruits piRNA bound aub and unbound AGO3, bringing them into close proximity to facilitate the loading onto AGO3 of freshly cut piRNAs generated by aub cleavage of target sequences; krimp recognizes the piRNA loading state of the Piwi proteins via symmetrically dimethylated arginine modification in their N-terminus. Important for asymmetric ping-pong amplification to bias production towards antisense piRNAs capable of silencing transposable elements. In testis, associates with Su(Ste) and AT-chX-1 piRNAs mostly produced from antisense precursors. In the germline, acts to amplify pools of antisense piRNAs, among others Su(Ste), AT-chX-1 and roo, and to limit sense piRNA accumulation. Forms a complex with smg, twin, aub and specific piRNAs that targets nos mRNA (and probably other maternal mRNAS) for deadenylation promoting its decay during early embryogenesis. Involved in transposon silencing in the adult brain. This chain is Protein argonaute-3, found in Drosophila melanogaster (Fruit fly).